Here is a 180-residue protein sequence, read N- to C-terminus: Adenine phosphoribosyltransferase (180 aa).

The protein belongs to the purine/pyrimidine phosphoribosyltransferase family. In terms of assembly, homodimer.

Its subcellular location is the cytoplasm. It carries out the reaction AMP + diphosphate = 5-phospho-alpha-D-ribose 1-diphosphate + adenine. The protein operates within purine metabolism; AMP biosynthesis via salvage pathway; AMP from adenine: step 1/1. Functionally, catalyzes a salvage reaction resulting in the formation of AMP, that is energically less costly than de novo synthesis. The polypeptide is Adenine phosphoribosyltransferase (Mycoplasma genitalium (strain ATCC 33530 / DSM 19775 / NCTC 10195 / G37) (Mycoplasmoides genitalium)).